The following is a 561-amino-acid chain: Carboxylesterase 4A (561 aa).

The signal sequence occupies residues 1 to 20 (MRWILCWSLTLCLMAQTALG). A disulfide bond links C88 and C116. N214 carries N-linked (GlcNAc...) asparagine glycosylation. S221 (acyl-ester intermediate) is an active-site residue. Residues C273 and C284 are joined by a disulfide bond. N276 carries an N-linked (GlcNAc...) asparagine glycan. E353 acts as the Charge relay system in catalysis. N-linked (GlcNAc...) asparagine glycosylation occurs at N388. H467 (charge relay system) is an active-site residue.

This sequence belongs to the type-B carboxylesterase/lipase family.

The protein resides in the secreted. Probable carboxylesterase. This is Carboxylesterase 4A (CES4A) from Homo sapiens (Human).